Reading from the N-terminus, the 444-residue chain is NAD-capped RNA hydrolase NUDT12 (444 aa).

2 ANK repeats span residues 11-40 (EIIS…SLLN) and 60-80 (SRQT…ANLL). Residue lysine 167 is modified to N6-succinyllysine. Cysteine 266 and cysteine 269 together coordinate Zn(2+). The residue at position 274 (lysine 274) is an N6-succinyllysine. Cysteine 284 and cysteine 289 together coordinate Zn(2+). Residues tyrosine 300, 336-338 (AGF), glutamate 352, glutamate 356, and glutamate 397 each bind substrate. The Nudix hydrolase domain maps to 301–435 (PRVDPVVIMQ…SRAIAHQLIK (135 aa)). Mg(2+)-binding residues include alanine 336, glutamate 352, glutamate 356, and glutamate 397. Positions 337–358 (GFIEPGETIEDAVRREVEEESG) match the Nudix box motif. The Microbody targeting signal signature appears at 442–444 (PNL).

It belongs to the Nudix hydrolase family. NudC subfamily. Homodimer. Homodimerization is essential for its catalytic activity and protein stability. Interacts (via ANK repeats) with BLMH. It depends on Mg(2+) as a cofactor. The cofactor is Zn(2+).

It localises to the cytoplasm. The protein resides in the peroxisome. The protein localises to the cytoplasmic granule. It carries out the reaction a 5'-end NAD(+)-phospho-ribonucleoside in mRNA + H2O = a 5'-end phospho-adenosine-phospho-ribonucleoside in mRNA + beta-nicotinamide D-ribonucleotide + 2 H(+). The enzyme catalyses NAD(+) + H2O = beta-nicotinamide D-ribonucleotide + AMP + 2 H(+). It catalyses the reaction NADH + H2O = reduced beta-nicotinamide D-ribonucleotide + AMP + 2 H(+). The catalysed reaction is NADPH + H2O = reduced beta-nicotinamide D-ribonucleotide + adenosine 2',5'-bisphosphate + 2 H(+). In terms of biological role, mRNA decapping enzyme that specifically removes the nicotinamide adenine dinucleotide (NAD) cap from a subset of mRNAs by hydrolyzing the diphosphate linkage to produce nicotinamide mononucleotide (NMN) and 5' monophosphate mRNA. The NAD-cap is present at the 5'-end of some RNAs; in contrast to the canonical N7 methylguanosine (m7G) cap, the NAD cap promotes mRNA decay. Preferentially acts on NAD-capped transcripts in response to nutrient stress. Also acts on free nicotinamide adenine dinucleotide molecules: hydrolyzes NAD(H) into NMN(H) and AMP, and NADPH into NMNH and 2',5'-ADP. May act to regulate the concentration of peroxisomal nicotinamide nucleotide cofactors required for oxidative metabolism in this organelle. Regulates the levels of circadian clock components PER1, PER2, PER3 and CRY2 in the liver. This is NAD-capped RNA hydrolase NUDT12 from Bos taurus (Bovine).